The chain runs to 415 residues: Multifunctional CCA protein (415 aa).

ATP contacts are provided by Gly-8 and Arg-11. 2 residues coordinate CTP: Gly-8 and Arg-11. The Mg(2+) site is built by Asp-21 and Asp-23. Arg-91, Arg-143, and Arg-146 together coordinate ATP. CTP-binding residues include Arg-91, Arg-143, and Arg-146. Positions 232–333 constitute an HD domain; it reads TGVHVMMVID…VRLLERCDAL (102 aa).

It belongs to the tRNA nucleotidyltransferase/poly(A) polymerase family. Bacterial CCA-adding enzyme type 1 subfamily. Monomer. Can also form homodimers and oligomers. It depends on Mg(2+) as a cofactor. The cofactor is Ni(2+).

It carries out the reaction a tRNA precursor + 2 CTP + ATP = a tRNA with a 3' CCA end + 3 diphosphate. The enzyme catalyses a tRNA with a 3' CCA end + 2 CTP + ATP = a tRNA with a 3' CCACCA end + 3 diphosphate. In terms of biological role, catalyzes the addition and repair of the essential 3'-terminal CCA sequence in tRNAs without using a nucleic acid template. Adds these three nucleotides in the order of C, C, and A to the tRNA nucleotide-73, using CTP and ATP as substrates and producing inorganic pyrophosphate. tRNA 3'-terminal CCA addition is required both for tRNA processing and repair. Also involved in tRNA surveillance by mediating tandem CCA addition to generate a CCACCA at the 3' terminus of unstable tRNAs. While stable tRNAs receive only 3'-terminal CCA, unstable tRNAs are marked with CCACCA and rapidly degraded. In Cupriavidus taiwanensis (strain DSM 17343 / BCRC 17206 / CCUG 44338 / CIP 107171 / LMG 19424 / R1) (Ralstonia taiwanensis (strain LMG 19424)), this protein is Multifunctional CCA protein.